A 456-amino-acid chain; its full sequence is Bifunctional protein GlmU (456 aa).

Residues 1 to 229 (MLNNAMSVVI…LSEVEGVNNR (229 aa)) are pyrophosphorylase. UDP-N-acetyl-alpha-D-glucosamine contacts are provided by residues 11–14 (LAAG), Lys-25, Gln-76, 81–82 (GT), 103–105 (YGD), Gly-140, Glu-154, Asn-169, and Asn-227. Asp-105 is a binding site for Mg(2+). Residue Asn-227 participates in Mg(2+) binding. Residues 230-250 (LQLSRLERVYQSEQAEKLLLA) form a linker region. The interval 251–456 (GVMLRDPARF…EGWRRPVKKK (206 aa)) is N-acetyltransferase. Residues Arg-333 and Lys-351 each coordinate UDP-N-acetyl-alpha-D-glucosamine. The active-site Proton acceptor is the His-363. UDP-N-acetyl-alpha-D-glucosamine is bound by residues Tyr-366 and Asn-377. Acetyl-CoA is bound by residues Ala-380, 386–387 (NY), Ser-405, Ala-423, and Arg-440.

The protein in the N-terminal section; belongs to the N-acetylglucosamine-1-phosphate uridyltransferase family. It in the C-terminal section; belongs to the transferase hexapeptide repeat family. As to quaternary structure, homotrimer. The cofactor is Mg(2+).

It localises to the cytoplasm. It carries out the reaction alpha-D-glucosamine 1-phosphate + acetyl-CoA = N-acetyl-alpha-D-glucosamine 1-phosphate + CoA + H(+). The catalysed reaction is N-acetyl-alpha-D-glucosamine 1-phosphate + UTP + H(+) = UDP-N-acetyl-alpha-D-glucosamine + diphosphate. It participates in nucleotide-sugar biosynthesis; UDP-N-acetyl-alpha-D-glucosamine biosynthesis; N-acetyl-alpha-D-glucosamine 1-phosphate from alpha-D-glucosamine 6-phosphate (route II): step 2/2. It functions in the pathway nucleotide-sugar biosynthesis; UDP-N-acetyl-alpha-D-glucosamine biosynthesis; UDP-N-acetyl-alpha-D-glucosamine from N-acetyl-alpha-D-glucosamine 1-phosphate: step 1/1. Its pathway is bacterial outer membrane biogenesis; LPS lipid A biosynthesis. Its function is as follows. Catalyzes the last two sequential reactions in the de novo biosynthetic pathway for UDP-N-acetylglucosamine (UDP-GlcNAc). The C-terminal domain catalyzes the transfer of acetyl group from acetyl coenzyme A to glucosamine-1-phosphate (GlcN-1-P) to produce N-acetylglucosamine-1-phosphate (GlcNAc-1-P), which is converted into UDP-GlcNAc by the transfer of uridine 5-monophosphate (from uridine 5-triphosphate), a reaction catalyzed by the N-terminal domain. The sequence is that of Bifunctional protein GlmU from Shigella flexneri serotype 5b (strain 8401).